The primary structure comprises 98 residues: Aspartyl/glutamyl-tRNA(Asn/Gln) amidotransferase subunit C (98 aa).

Belongs to the GatC family. Heterotrimer of A, B and C subunits.

The enzyme catalyses L-glutamyl-tRNA(Gln) + L-glutamine + ATP + H2O = L-glutaminyl-tRNA(Gln) + L-glutamate + ADP + phosphate + H(+). It catalyses the reaction L-aspartyl-tRNA(Asn) + L-glutamine + ATP + H2O = L-asparaginyl-tRNA(Asn) + L-glutamate + ADP + phosphate + 2 H(+). Functionally, allows the formation of correctly charged Asn-tRNA(Asn) or Gln-tRNA(Gln) through the transamidation of misacylated Asp-tRNA(Asn) or Glu-tRNA(Gln) in organisms which lack either or both of asparaginyl-tRNA or glutaminyl-tRNA synthetases. The reaction takes place in the presence of glutamine and ATP through an activated phospho-Asp-tRNA(Asn) or phospho-Glu-tRNA(Gln). In Beutenbergia cavernae (strain ATCC BAA-8 / DSM 12333 / CCUG 43141 / JCM 11478 / NBRC 16432 / NCIMB 13614 / HKI 0122), this protein is Aspartyl/glutamyl-tRNA(Asn/Gln) amidotransferase subunit C.